Here is a 254-residue protein sequence, read N- to C-terminus: Probable transcriptional regulatory protein Saro_0419 (254 aa).

The segment covering 1 to 14 (MAGHSKFKNIMHRK) has biased composition (basic residues). The disordered stretch occupies residues 1–22 (MAGHSKFKNIMHRKGAQDKKRS).

Belongs to the TACO1 family.

Its subcellular location is the cytoplasm. This chain is Probable transcriptional regulatory protein Saro_0419, found in Novosphingobium aromaticivorans (strain ATCC 700278 / DSM 12444 / CCUG 56034 / CIP 105152 / NBRC 16084 / F199).